The chain runs to 482 residues: 3-isopropylmalate dehydratase large subunit (482 aa).

Residues 60-79 form a disordered region; it reads ATPDHNVPTTRAERQGGLES. Residues Cys-353, Cys-414, and Cys-417 each coordinate [4Fe-4S] cluster.

It belongs to the aconitase/IPM isomerase family. LeuC type 1 subfamily. As to quaternary structure, heterodimer of LeuC and LeuD. The cofactor is [4Fe-4S] cluster.

The catalysed reaction is (2R,3S)-3-isopropylmalate = (2S)-2-isopropylmalate. Its pathway is amino-acid biosynthesis; L-leucine biosynthesis; L-leucine from 3-methyl-2-oxobutanoate: step 2/4. In terms of biological role, catalyzes the isomerization between 2-isopropylmalate and 3-isopropylmalate, via the formation of 2-isopropylmaleate. This Xanthomonas euvesicatoria pv. vesicatoria (strain 85-10) (Xanthomonas campestris pv. vesicatoria) protein is 3-isopropylmalate dehydratase large subunit.